The sequence spans 1068 residues: Protein AF-10 (1068 aa).

The PHD-type 1 zinc-finger motif lies at 22–74; the sequence is IGGCCVCSDERGWAENPLVYCDGHGCSVAVHQACYGIVQVPTGPWFCRKCESQ. The C2HC pre-PHD-type zinc finger occupies 79 to 112; that stretch reads RVRCELCPHKDGALKRTDNGGWAHVVCALYIPEV. Residues 106 to 190 are required for interaction with histone H3; it reads ALYIPEVQFA…EGNGADNVQY (85 aa). The PHD-type 2 zinc finger occupies 135 to 198; it reads KTCYICDEQG…QYCGYCKYHF (64 aa). A disordered region spans residues 207–260; that stretch reads GSNRSYEQSLSDSSSHSQDKHHEKEKKKYKEKDKHKQKHKKQPEPSPALVPSLT. At S217 the chain carries Phosphoserine. Positions 223 to 240 are enriched in basic and acidic residues; that stretch reads SQDKHHEKEKKKYKEKDK. S252 bears the Phosphoserine mark. K280 is covalently cross-linked (Glycyl lysine isopeptide (Lys-Gly) (interchain with G-Cter in SUMO2)). Polar residues predominate over residues 296-305; sequence EVSAHTSSGK. 2 disordered regions span residues 296-416 and 428-506; these read EVSA…SFSS and SQPK…SVAS. A compositionally biased stretch (basic and acidic residues) spans 306-317; it reads DVSEARGSEGKG. Polar residues predominate over residues 340–351; the sequence is TAVSASSPFPQG. The segment covering 352 to 372 has biased composition (low complexity); that stretch reads SFSGTPGSVKSSSGSSVQSPQ. Polar residues-rich tracts occupy residues 387–396, 404–416, and 428–446; these read YTHTQQPSST, SGSQEAAVNSFSS, and SQPKSFDNSPGELGSSSLP. S436 carries the phosphoserine modification. The span at 465 to 483 shows a compositional bias: basic residues; it reads EKKRKGNKQSKHGPGRPKG. Over residues 490–506 the composition is skewed to low complexity; it reads VSHLSVSSASPTSSVAS. S532 is subject to Phosphoserine. The span at 583 to 594 shows a compositional bias: low complexity; that stretch reads SGSGSSTPVSSS. 2 disordered regions span residues 583 to 613 and 660 to 698; these read SGSGSSTPVSSSHIPQQSSGHLQQVGALSPS and SESSQTDQDLGDNARSLGGRGSSPRGSLSPRSPVSNLQL. Over residues 595 to 604 the composition is skewed to polar residues; it reads HIPQQSSGHL. The segment covering 681 to 692 has biased composition (low complexity); that stretch reads SSPRGSLSPRSP. Residues S686, S688, and S691 each carry the phosphoserine modification. The segment at 752–780 is leucine-zipper; sequence LQVENRRLEEQIKNLTAKKERLQLLNAQL. Disordered regions lie at residues 786–869 and 1040–1068; these read AITT…VSGV and PFLTIHGDSTSQKVTRLSDKTGPVAQEKS. Polar residues predominate over residues 787-816; sequence ITTNPSPSHQMHTYTAQTAPPPDSLNSSKS. Composition is skewed to low complexity over residues 836–850 and 857–869; these read LTSSGQSTSSSSALS and QSPAQQSSGVSGV. Positions 1040-1054 are enriched in polar residues; sequence PFLTIHGDSTSQKVT.

Self-associates. Interacts with FSTL3; the interaction enhances MLLT10 in vitro transcriptional activity and self-association. Interacts with YEATS4. Interacts with SS18. Interacts with DOT1L. Interacts with histone H3; interaction is necessary for MLLT10 binding to nucleosomes; interaction is inhibited by histone H3 'Lys-27' methylations (H3K27me1, H3K27me2 and H3K27me3) amd acetylation; interaction stabilizes association of MLLT10 at chromatin; interaction is essential for histone H3 'Lys-79' dimethylation (H3K79me2).

The protein localises to the nucleus. Probably involved in transcriptional regulation. Binds to cruciform DNA. In cells, binding to unmodified histone H3 regulates DOT1L functions including histone H3 'Lys-79' dimethylation (H3K79me2) and gene activation. The polypeptide is Protein AF-10 (Mus musculus (Mouse)).